The following is a 238-amino-acid chain: MIYAGILAGGIGSRMGNVPLPKQFLSLQGKPIIIHTVEKFLMYKDFDEIIIATPQKWINYMLDLLNNYQLDDKKIKVIQGGDDRNHSIMNIIESIEQHKKLNDEDIIVTHDAVRPFLTNRIIRENVEYASQYGAVDTVVNAVDTIISSNDAQFISGIPIRSEMYQGQTPQTFKIKELKDSYLSLTQSQKEILTDACKILVELGKPVKLVKGELFNIKITTPYDLKVANSIITGAVDND.

CTP contacts are provided by residues 7-10 and 81-87; these read LAGG and GDDRNHS.

Belongs to the IspD/TarI cytidylyltransferase family. TarI subfamily.

It carries out the reaction D-ribitol 5-phosphate + CTP + H(+) = CDP-L-ribitol + diphosphate. Its pathway is cell wall biogenesis; poly(ribitol phosphate) teichoic acid biosynthesis. Its function is as follows. Catalyzes the transfer of the cytidylyl group of CTP to D-ribitol 5-phosphate. The polypeptide is Ribitol-5-phosphate cytidylyltransferase (Staphylococcus epidermidis (strain ATCC 12228 / FDA PCI 1200)).